A 23-amino-acid chain; its full sequence is Cysteine-rich venom protein 24 (23 aa).

The interval 1 to 23 (VDFASESXNKRENQQIVDKHNAL) is disordered. Over residues 8–23 (XNKRENQQIVDKHNAL) the composition is skewed to basic and acidic residues.

The protein belongs to the CRISP family. In terms of processing, contains 8 disulfide bonds. As to expression, expressed by the venom gland.

It localises to the secreted. This is Cysteine-rich venom protein 24 from Naja kaouthia (Monocled cobra).